The primary structure comprises 232 residues: MKIAIIGAMEEEVTILRDKIEEREETVIANCEFSTGRLNGADVILLKSGIGKVNAAMSTAILLERFRPDYVINTGSAGGFLSTLNVGDVVISNEVVHHDVDVTAFGYEYGQVPGMPARYKADETLVKIAEQNAKQIKDIQVVTGLIATGDSFMNDPARVEFVRSKFPELCAAEMEAAAIAQVCTQFAVPFVIIRALSDIAGKESNVSFEQFLDTAAKHSADLVLSIVSSLQK.

Glu-12 serves as the catalytic Proton acceptor. Substrate is bound by residues Gly-78, Met-153, and 174–175; that span reads ME. The active-site Proton donor is Asp-198.

Belongs to the PNP/UDP phosphorylase family. MtnN subfamily.

It carries out the reaction S-adenosyl-L-homocysteine + H2O = S-(5-deoxy-D-ribos-5-yl)-L-homocysteine + adenine. The catalysed reaction is S-methyl-5'-thioadenosine + H2O = 5-(methylsulfanyl)-D-ribose + adenine. It catalyses the reaction 5'-deoxyadenosine + H2O = 5-deoxy-D-ribose + adenine. The protein operates within amino-acid biosynthesis; L-methionine biosynthesis via salvage pathway; S-methyl-5-thio-alpha-D-ribose 1-phosphate from S-methyl-5'-thioadenosine (hydrolase route): step 1/2. In terms of biological role, catalyzes the irreversible cleavage of the glycosidic bond in both 5'-methylthioadenosine (MTA) and S-adenosylhomocysteine (SAH/AdoHcy) to adenine and the corresponding thioribose, 5'-methylthioribose and S-ribosylhomocysteine, respectively. Also cleaves 5'-deoxyadenosine, a toxic by-product of radical S-adenosylmethionine (SAM) enzymes, into 5-deoxyribose and adenine. In Geobacillus sp. (strain WCH70), this protein is 5'-methylthioadenosine/S-adenosylhomocysteine nucleosidase.